The chain runs to 175 residues: Clathrin-associated protein AP-3 complex component APS3 (175 aa).

This sequence belongs to the adaptor complexes small subunit family. As to quaternary structure, adaptor protein complex 3 (AP-3) is a heterotetramer composed of 2 large adaptins, a medium adaptin and a small adaptin.

Its subcellular location is the golgi apparatus. The protein localises to the cytoplasmic vesicle membrane. Part of the AP-3 complex, an adapter-related complex which is not clathrin-associated. The complex is associated with the Golgi region as well as more peripheral structures. It facilitates the budding of vesicles from the Golgi membrane. Involved in vacuolar trafficking and contributes to hyphal growth and pathogenesis. This Candida albicans (strain SC5314 / ATCC MYA-2876) (Yeast) protein is Clathrin-associated protein AP-3 complex component APS3 (APS3).